We begin with the raw amino-acid sequence, 401 residues long: Mannonate dehydratase (401 aa).

Belongs to the mannonate dehydratase family. The cofactor is Fe(2+). It depends on Mn(2+) as a cofactor.

It carries out the reaction D-mannonate = 2-dehydro-3-deoxy-D-gluconate + H2O. Its pathway is carbohydrate metabolism; pentose and glucuronate interconversion. Catalyzes the dehydration of D-mannonate. This is Mannonate dehydratase from Brucella canis (strain ATCC 23365 / NCTC 10854 / RM-666).